The sequence spans 206 residues: MTEDKKTIPEEQVEAEQVVVEEVEAELVENDESAQPQEEAEASNEDLNMIEVLNKKLALAEQQIVDQQADVARAQADVVNARRIAAQDVQKAHKFALVKFADGLLPVIDSLEMAISHADKEDETLKPMIEGVELTLKSMLDTVDKFGLKVIDPKDEAFDPEKHQAMSMRAVPDVAPNQVIAVMQKGYELNGRVIRPAMVMVSKAED.

The protein belongs to the GrpE family. In terms of assembly, homodimer.

The protein localises to the cytoplasm. Participates actively in the response to hyperosmotic and heat shock by preventing the aggregation of stress-denatured proteins, in association with DnaK and GrpE. It is the nucleotide exchange factor for DnaK and may function as a thermosensor. Unfolded proteins bind initially to DnaJ; upon interaction with the DnaJ-bound protein, DnaK hydrolyzes its bound ATP, resulting in the formation of a stable complex. GrpE releases ADP from DnaK; ATP binding to DnaK triggers the release of the substrate protein, thus completing the reaction cycle. Several rounds of ATP-dependent interactions between DnaJ, DnaK and GrpE are required for fully efficient folding. This is Protein GrpE from Psychromonas ingrahamii (strain DSM 17664 / CCUG 51855 / 37).